The primary structure comprises 379 residues: V-type proton ATPase subunit S1 (379 aa).

An N-terminal signal peptide occupies residues 1 to 17 (MLWKSLIALCVIGAAVA). The Lumenal segment spans residues 18 to 333 (EQTPVFLWGA…WDCVGFVTPG (316 aa)). 2 N-linked (GlcNAc...) asparagine glycosylation sites follow: Asn-225 and Asn-284. The cysteines at positions 282 and 326 are disulfide-linked. A helical membrane pass occupies residues 334–354 (ILMGLFVVALLLVIMFVGVCW). The Cytoplasmic portion of the chain corresponds to 355 to 379 (MMDINTMDRFDDPKGKTITINAAAE).

It belongs to the vacuolar ATPase subunit S1 family. Accessory component of the multisubunit proton-transporting vacuolar (V)-ATPase protein pump. May interact with ATP6AP2.

It localises to the endoplasmic reticulum membrane. Its function is as follows. Accessory subunit of the proton-transporting vacuolar (V)-ATPase protein pump, which is required for luminal acidification of secretory vesicles. The sequence is that of V-type proton ATPase subunit S1 from Drosophila melanogaster (Fruit fly).